The following is a 153-amino-acid chain: D-aminoacyl-tRNA deacylase (153 aa).

The Gly-cisPro motif, important for rejection of L-amino acids signature appears at Gly-137–Pro-138.

This sequence belongs to the DTD family. As to quaternary structure, homodimer.

The protein localises to the cytoplasm. The catalysed reaction is glycyl-tRNA(Ala) + H2O = tRNA(Ala) + glycine + H(+). The enzyme catalyses a D-aminoacyl-tRNA + H2O = a tRNA + a D-alpha-amino acid + H(+). An aminoacyl-tRNA editing enzyme that deacylates mischarged D-aminoacyl-tRNAs. Also deacylates mischarged glycyl-tRNA(Ala), protecting cells against glycine mischarging by AlaRS. Acts via tRNA-based rather than protein-based catalysis; rejects L-amino acids rather than detecting D-amino acids in the active site. By recycling D-aminoacyl-tRNA to D-amino acids and free tRNA molecules, this enzyme counteracts the toxicity associated with the formation of D-aminoacyl-tRNA entities in vivo and helps enforce protein L-homochirality. The polypeptide is D-aminoacyl-tRNA deacylase (Dehalococcoides mccartyi (strain ATCC BAA-2100 / JCM 16839 / KCTC 5957 / BAV1)).